The sequence spans 544 residues: Probable protein kinase UbiB (544 aa).

The region spanning 123–500 (DFDEKALASA…RNKQRKSQYL (378 aa)) is the Protein kinase domain. ATP is bound by residues 129 to 137 (LASASIAQV) and K152. The active-site Proton acceptor is the D286. A run of 2 helical transmembrane segments spans residues 499–519 (YLLG…ISAS) and 522–542 (MAIA…YKSG).

The protein belongs to the ABC1 family. UbiB subfamily.

The protein localises to the cell inner membrane. It participates in cofactor biosynthesis; ubiquinone biosynthesis [regulation]. In terms of biological role, is probably a protein kinase regulator of UbiI activity which is involved in aerobic coenzyme Q (ubiquinone) biosynthesis. Required for the expression of 2'-N-acetyltransferase. The polypeptide is Probable protein kinase UbiB (Providencia stuartii).